We begin with the raw amino-acid sequence, 500 residues long: Metacaspase-5 (500 aa).

The signal sequence occupies residues 1 to 18; sequence MDAALALLFGQVATAVLP. The segment at 19–63 is important for catalytic activity; that stretch reads YVVNSIGRVPRPKRVDVKKAMGEAHQCRPVVPYRAPRPYTEGRVK. Residues N70 and N113 are each glycosylated (N-linked (GlcNAc...) asparagine). Residue H147 is part of the active site. Positions 162, 178, and 179 each coordinate Ca(2+). Residue C202 is part of the active site. Position 209 (D209) interacts with Ca(2+). N-linked (GlcNAc...) asparagine glycosylation is found at N219, N235, N258, N264, N283, and N332. Disordered stretches follow at residues 358 to 419 and 444 to 500; these read EATL…QAYY and QPPQ…PGRK. Residues 379-389 show a composition bias toward polar residues; that stretch reads ASTSNGKSNPG. The span at 444–461 shows a compositional bias: low complexity; that stretch reads QPPQQAYYQPPQQAYYQP.

The protein belongs to the peptidase C14B family.

It localises to the recycling endosome. Its function is as follows. Cysteine protease that cleaves specifically after arginine or lysine residues. The chain is Metacaspase-5 from Trypanosoma brucei brucei.